The primary structure comprises 512 residues: Secreted triacylglycerol lipase LIP5 (512 aa).

Positions 1–17 (MMYASLVHWLALAVALA) are cleaved as a signal peptide. A disulfide bond links Cys118 and Cys292. Ser203 functions as the Nucleophile in the catalytic mechanism. N-linked (GlcNAc...) asparagine glycosylation is present at Asn316. Asp352 is an active-site residue. Asn361 carries an N-linked (GlcNAc...) asparagine glycan. His386 is an active-site residue. The N-linked (GlcNAc...) asparagine glycan is linked to Asn453. Positions 480–512 (KGDISPGEGGDHTKESKKAAAKFKAEKKHGKHH) are disordered. Residues 488 to 497 (GGDHTKESKK) are compositionally biased toward basic and acidic residues. The span at 498–512 (AAAKFKAEKKHGKHH) shows a compositional bias: basic residues.

Belongs to the AB hydrolase superfamily. Lipase family. Class Lip subfamily.

The protein localises to the secreted. It catalyses the reaction a triacylglycerol + H2O = a diacylglycerol + a fatty acid + H(+). The catalysed reaction is a monoacylglycerol + H2O = glycerol + a fatty acid + H(+). It carries out the reaction a diacylglycerol + H2O = a monoacylglycerol + a fatty acid + H(+). Secreted lipase that hydrolyzes acylglycerol lipids such as triacylglycerols and consequently releases free fatty acid. Can hydrolyze 4-nitrophenyl palmitate to release 4-nitrophenol and palmitoic acid. Due to an absence of fatty acid synthase genes in Malassezia species, secretory lipases are essential for the yeast to generate free fatty acids from degradation of sebum and assimilate them as lipid sources for growth. Plays an essential role at the pathogen-host interface during disease progression. In Malassezia restricta (strain ATCC 96810 / NBRC 103918 / CBS 7877) (Seborrheic dermatitis infection agent), this protein is Secreted triacylglycerol lipase LIP5.